The primary structure comprises 213 residues: ATP synthase peripheral stalk subunit OSCP, mitochondrial (213 aa).

Residues Met1 to Pro23 constitute a mitochondrion transit peptide. The SIFI-degron motif lies at Ala5 to Pro23. Lys60, Lys70, and Lys73 each carry N6-acetyllysine. Lys90 is subject to N6-succinyllysine. N6-acetyllysine; alternate is present on residues Lys100 and Lys158. 2 positions are modified to N6-succinyllysine; alternate: Lys100 and Lys158. An N6-acetyllysine mark is found at Lys176 and Lys192. Lys199 carries the post-translational modification N6-succinyllysine.

This sequence belongs to the ATPase delta chain family. As to quaternary structure, component of the ATP synthase complex composed at least of ATP5F1A/subunit alpha, ATP5F1B/subunit beta, ATP5MC1/subunit c (homooctomer), MT-ATP6/subunit a, MT-ATP8/subunit 8, ATP5ME/subunit e, ATP5MF/subunit f, ATP5MG/subunit g, ATP5MK/subunit k, ATP5MJ/subunit j, ATP5F1C/subunit gamma, ATP5F1D/subunit delta, ATP5F1E/subunit epsilon, ATP5PF/subunit F6, ATP5PB/subunit b, ATP5PD/subunit d, ATP5PO/subunit OSCP. ATP synthase complex consists of a soluble F(1) head domain (subunits alpha(3) and beta(3)) - the catalytic core - and a membrane F(0) domain - the membrane proton channel (subunits c, a, 8, e, f, g, k and j). These two domains are linked by a central stalk (subunits gamma, delta, and epsilon) rotating inside the F1 region and a stationary peripheral stalk (subunits F6, b, d, and OSCP). In response to mitochondrial stress, the precursor protein is ubiquitinated by the SIFI complex in the cytoplasm before mitochondrial import, leading to its degradation. Within the SIFI complex, UBR4 initiates ubiquitin chain that are further elongated or branched by KCMF1. In terms of tissue distribution, expressed by the principal cells of the epididymis. Detected in flagella of epididymal sperm (at protein level).

It is found in the mitochondrion. It localises to the mitochondrion inner membrane. In terms of biological role, subunit OSCP, of the mitochondrial membrane ATP synthase complex (F(1)F(0) ATP synthase or Complex V) that produces ATP from ADP in the presence of a proton gradient across the membrane which is generated by electron transport complexes of the respiratory chain. ATP synthase complex consist of a soluble F(1) head domain - the catalytic core - and a membrane F(1) domain - the membrane proton channel. These two domains are linked by a central stalk rotating inside the F(1) region and a stationary peripheral stalk. During catalysis, ATP synthesis in the catalytic domain of F(1) is coupled via a rotary mechanism of the central stalk subunits to proton translocation. In vivo, can only synthesize ATP although its ATP hydrolase activity can be activated artificially in vitro. Part of the complex F(0) domain. Part of the complex F(0) domain and the peripheric stalk, which acts as a stator to hold the catalytic alpha(3)beta(3) subcomplex and subunit a/ATP6 static relative to the rotary elements. This is ATP synthase peripheral stalk subunit OSCP, mitochondrial from Rattus norvegicus (Rat).